Reading from the N-terminus, the 281-residue chain is Nucleotide-binding protein MADE_1004170 (281 aa).

8 to 15 (GRSGSGKS) contacts ATP. GTP is bound at residue 56–59 (DVRN).

The protein belongs to the RapZ-like family.

Functionally, displays ATPase and GTPase activities. This is Nucleotide-binding protein MADE_1004170 from Alteromonas mediterranea (strain DSM 17117 / CIP 110805 / LMG 28347 / Deep ecotype).